The primary structure comprises 284 residues: Nucleotide-binding protein Shewmr4_0670 (284 aa).

8-15 (GRSGSGKS) contacts ATP. Residue 56–59 (DVRN) coordinates GTP.

It belongs to the RapZ-like family.

Its function is as follows. Displays ATPase and GTPase activities. This Shewanella sp. (strain MR-4) protein is Nucleotide-binding protein Shewmr4_0670.